A 374-amino-acid polypeptide reads, in one-letter code: UDP-N-acetylglucosamine--N-acetylmuramyl-(pentapeptide) pyrophosphoryl-undecaprenol N-acetylglucosamine transferase (374 aa).

Residues 13 to 15, Asn124, Arg165, Ser193, and Gln294 each bind UDP-N-acetyl-alpha-D-glucosamine; that span reads TGG.

Belongs to the glycosyltransferase 28 family. MurG subfamily.

The protein resides in the cell inner membrane. It carries out the reaction di-trans,octa-cis-undecaprenyl diphospho-N-acetyl-alpha-D-muramoyl-L-alanyl-D-glutamyl-meso-2,6-diaminopimeloyl-D-alanyl-D-alanine + UDP-N-acetyl-alpha-D-glucosamine = di-trans,octa-cis-undecaprenyl diphospho-[N-acetyl-alpha-D-glucosaminyl-(1-&gt;4)]-N-acetyl-alpha-D-muramoyl-L-alanyl-D-glutamyl-meso-2,6-diaminopimeloyl-D-alanyl-D-alanine + UDP + H(+). It functions in the pathway cell wall biogenesis; peptidoglycan biosynthesis. Functionally, cell wall formation. Catalyzes the transfer of a GlcNAc subunit on undecaprenyl-pyrophosphoryl-MurNAc-pentapeptide (lipid intermediate I) to form undecaprenyl-pyrophosphoryl-MurNAc-(pentapeptide)GlcNAc (lipid intermediate II). This Rhizobium leguminosarum bv. trifolii (strain WSM2304) protein is UDP-N-acetylglucosamine--N-acetylmuramyl-(pentapeptide) pyrophosphoryl-undecaprenol N-acetylglucosamine transferase.